We begin with the raw amino-acid sequence, 626 residues long: Solute carrier family 13 member 4 (626 aa).

4 helical membrane passes run 13–33, 52–72, 77–97, and 113–133; these read LLLV…HPSS, AVPL…FGVL, VAAE…CVAA, and VLMA…CTTL. Positions 217–228 are enriched in polar residues; sequence SITNPIKTANQH. The tract at residues 217–252 is disordered; that stretch reads SITNPIKTANQHQGKKQHPSQEKPQVLTPSPRKQKL. Helical transmembrane passes span 274-294, 309-329, 372-392, 414-434, 466-486, 499-519, 543-563, and 590-610; these read YSAT…LIFL, FGTW…VSWF, ISYP…LWFT, ATVS…KPCF, IVIL…SGLS, LPPW…TEFV, PLYT…LPVG, and VIGL…LFHL.

The protein belongs to the SLC13A/DASS transporter (TC 2.A.47) family. NADC subfamily. Highly expressed in placenta and testis with intermediate levels in brain and lower levels in heart, thymus and liver.

The protein localises to the membrane. The catalysed reaction is sulfate(out) + 3 Na(+)(out) = sulfate(in) + 3 Na(+)(in). Transport is inhibited by thiosulfate, phosphate, molybdate, selenate and tungstate. Not inhibited by oxalate, citrate, succinate, phenol red or 4,4'-diisothiocyanostilbene-2,2'-disulfonic acid (DIDS). Sodium:sulfate symporter that mediates sulfate reabsorption in the high endothelial venules (HEV). This Homo sapiens (Human) protein is Solute carrier family 13 member 4 (SLC13A4).